The sequence spans 256 residues: MPVEITVKELLEAGVHFGHERKRWNPKFARYIYAERNGIHIIDLQKTMEELERTFRFIEDLAMRGGTILFVGTKKQAQDIVRMEAERAGMPYVNQRWLGGMLTNFKTISQRVHRLEELEALFASPEIEERPKKEQVRLKHELERLQKYLSGFRLLKRLPDAIFVVDPTKEAIAVREARKLFIPVIALADTDSDPDLVDYIIPGNDDAIRSIQLILSRAVDLIIQARGGVVEPSPSYALVQEAEATETPEGESEVEA.

Residues 104-149 (NFKTISQRVHRLEELEALFASPEIEERPKKEQVRLKHELERLQKYL) are a coiled coil.

It belongs to the universal ribosomal protein uS2 family. As to quaternary structure, part of the 30S ribosomal subunit. Contacts protein S8.

In terms of biological role, spans the head-body hinge region of the 30S subunit. Is loosely associated with the 30S subunit. This Thermus thermophilus (strain ATCC BAA-163 / DSM 7039 / HB27) protein is Small ribosomal subunit protein uS2 (rpsB).